The sequence spans 155 residues: Large ribosomal subunit protein uL30 (155 aa).

Belongs to the universal ribosomal protein uL30 family. In terms of assembly, part of the 50S ribosomal subunit.

This is Large ribosomal subunit protein uL30 from Nanoarchaeum equitans (strain Kin4-M).